The chain runs to 141 residues: Hemoglobin subunit alpha (141 aa).

Residues 1–141 (VLSPADKTNI…VSTVLTSKYR (141 aa)) enclose the Globin domain. Ser3 is modified (phosphoserine). Lys7 is subject to N6-succinyllysine. Thr8 bears the Phosphothreonine mark. The residue at position 11 (Lys11) is an N6-succinyllysine. Lys16 is modified (N6-acetyllysine; alternate). Residue Lys16 is modified to N6-succinyllysine; alternate. Position 24 is a phosphotyrosine (Tyr24). Ser35 carries the post-translational modification Phosphoserine. The residue at position 40 (Lys40) is an N6-succinyllysine. Ser49 carries the phosphoserine modification. His58 lines the O2 pocket. Heme b is bound at residue His87. A Phosphoserine modification is found at Ser102. Position 108 is a phosphothreonine (Thr108). Residue Ser124 is modified to Phosphoserine. Residues Thr134 and Thr137 each carry the phosphothreonine modification. Ser138 is subject to Phosphoserine.

This sequence belongs to the globin family. As to quaternary structure, heterotetramer of two alpha chains and two beta chains. Red blood cells.

Involved in oxygen transport from the lung to the various peripheral tissues. Functionally, hemopressin acts as an antagonist peptide of the cannabinoid receptor CNR1. Hemopressin-binding efficiently blocks cannabinoid receptor CNR1 and subsequent signaling. This chain is Hemoglobin subunit alpha (HBA), found in Chrysocyon brachyurus (Maned wolf).